A 446-amino-acid polypeptide reads, in one-letter code: Tubulin gamma chain (446 aa).

142–148 (AGGTGSG) is a GTP binding site.

This sequence belongs to the tubulin family.

It localises to the cytoplasm. The protein localises to the cytoskeleton. The protein resides in the microtubule organizing center. It is found in the spindle pole body. Tubulin is the major constituent of microtubules. The gamma chain is found at microtubule organizing centers (MTOC) such as the spindle poles or the centrosome, suggesting that it is involved in the minus-end nucleation of microtubule assembly. This is Tubulin gamma chain (tug1) from Schizosaccharomyces japonicus (Fission yeast).